The chain runs to 386 residues: Patatin-2-Kuras 3 (386 aa).

The N-terminal stretch at 1–23 (MATTKSVLVLFFMILATTSSTCA) is a signal peptide. The PNPLA domain occupies 32–229 (LSIDGGGIKG…TVGDPALLSL (198 aa)). Residues 36-41 (GGGIKG) carry the GXGXXG motif. Residues 75–79 (GTSTG) carry the GXSXG motif. Serine 77 (nucleophile) is an active-site residue. A glycan (N-linked (GlcNAc...) asparagine) is linked at asparagine 115. The active-site Proton acceptor is the aspartate 215. The short motif at 215-217 (DGA) is the DGA/G element. Residues 321–384 (ENALTGTTTE…DRKKLRANKA (64 aa)) adopt a coiled-coil conformation.

It belongs to the patatin family. In terms of tissue distribution, tuber.

Its subcellular location is the vacuole. Probable lipolytic acyl hydrolase (LAH), an activity which is thought to be involved in the response of tubers to pathogens. The sequence is that of Patatin-2-Kuras 3 (pat2-k3) from Solanum tuberosum (Potato).